A 364-amino-acid chain; its full sequence is N-acetyl-gamma-glutamyl-phosphate reductase (364 aa).

Residue cysteine 157 is part of the active site.

It belongs to the NAGSA dehydrogenase family. Type 1 subfamily.

It is found in the cytoplasm. The catalysed reaction is N-acetyl-L-glutamate 5-semialdehyde + phosphate + NADP(+) = N-acetyl-L-glutamyl 5-phosphate + NADPH + H(+). It functions in the pathway amino-acid biosynthesis; L-arginine biosynthesis; N(2)-acetyl-L-ornithine from L-glutamate: step 3/4. Functionally, catalyzes the NADPH-dependent reduction of N-acetyl-5-glutamyl phosphate to yield N-acetyl-L-glutamate 5-semialdehyde. In Bifidobacterium longum (strain NCC 2705), this protein is N-acetyl-gamma-glutamyl-phosphate reductase.